The sequence spans 304 residues: Ubiquitin thioesterase OTU1 (304 aa).

The tract at residues 5–83 is UBX-like; it reads RCKTREGTQL…IVEEDKSKLR (79 aa). Residues 105 to 230 form the OTU domain; the sequence is IVRRVVPADN…GIHYDPLQRQ (126 aa). Positions 110–116 are cys-loop; sequence VPADNSC. D113 is a catalytic residue. Catalysis depends on C116, which acts as the Nucleophile. A variable-loop region spans residues 169-179; sequence IRREDTWGGAI. The his-loop stretch occupies residues 219-223; sequence YDGIH. I222 provides a ligand contact to substrate. H223 is an active-site residue. Residues 247-252 are S2 site; that stretch reads DEALVQ. The C2H2-type zinc-finger motif lies at 274-298; it reads LRCMACQKGLTGQSAARDHAKETGH. Residue H298 is part of the active site.

The protein resides in the cytoplasm. The enzyme catalyses Thiol-dependent hydrolysis of ester, thioester, amide, peptide and isopeptide bonds formed by the C-terminal Gly of ubiquitin (a 76-residue protein attached to proteins as an intracellular targeting signal).. Functionally, hydrolase that can remove conjugated ubiquitin from proteins and participates in endoplasmic reticulum-associated degradation (ERAD) for misfolded lumenal proteins. May act by triming the ubiquitin chain on the associated substrate to facilitate their threading through the VCP/p97 pore. Ubiquitin moieties on substrates may present a steric impediment to the threading process when the substrate is transferred to the VCP pore and threaded through VCP's axial channel. Mediates deubiquitination of 'Lys-27'-, 'Lys-29'- and 'Lys-33'-linked polyubiquitin chains. Also able to hydrolyze 'Lys-11'-linked ubiquitin chains. Cleaves both polyubiquitin and di-ubiquitin. This is Ubiquitin thioesterase OTU1 (yod1) from Xenopus laevis (African clawed frog).